The sequence spans 375 residues: Cobalt-precorrin-5B C(1)-methyltransferase (375 aa).

This sequence belongs to the CbiD family.

The catalysed reaction is Co-precorrin-5B + S-adenosyl-L-methionine = Co-precorrin-6A + S-adenosyl-L-homocysteine. Its pathway is cofactor biosynthesis; adenosylcobalamin biosynthesis; cob(II)yrinate a,c-diamide from sirohydrochlorin (anaerobic route): step 6/10. Its function is as follows. Catalyzes the methylation of C-1 in cobalt-precorrin-5B to form cobalt-precorrin-6A. The protein is Cobalt-precorrin-5B C(1)-methyltransferase of Fusobacterium nucleatum subsp. nucleatum (strain ATCC 25586 / DSM 15643 / BCRC 10681 / CIP 101130 / JCM 8532 / KCTC 2640 / LMG 13131 / VPI 4355).